Here is a 300-residue protein sequence, read N- to C-terminus: ATP synthase gamma chain (300 aa).

The protein belongs to the ATPase gamma chain family. F-type ATPases have 2 components, CF(1) - the catalytic core - and CF(0) - the membrane proton channel. CF(1) has five subunits: alpha(3), beta(3), gamma(1), delta(1), epsilon(1). CF(0) has three main subunits: a, b and c.

It localises to the cell membrane. Its function is as follows. Produces ATP from ADP in the presence of a proton gradient across the membrane. The gamma chain is believed to be important in regulating ATPase activity and the flow of protons through the CF(0) complex. This is ATP synthase gamma chain from Acidothermus cellulolyticus (strain ATCC 43068 / DSM 8971 / 11B).